A 519-amino-acid chain; its full sequence is Serine/threonine-protein kinase RIO1 (519 aa).

Over residues 1–10 (MTPAPEPQDP) the composition is skewed to pro residues. Residues 1 to 54 (MTPAPEPQDPPTIHEPVATEQTDDISDWDVESDYEDGYGAPSKSQAQGGASAAD) are disordered. Residues 21–36 (QTDDISDWDVESDYED) show a composition bias toward acidic residues. Residues 39–53 (GAPSKSQAQGGASAA) are compositionally biased toward low complexity. Residues 122–519 (SEIYGTISTG…KLVAANKKRK (398 aa)) form the Protein kinase domain. Positions 154 and 228 each coordinate ATP. Residue Asp-281 is the Proton acceptor of the active site. Residues Asn-286 and Asp-298 each contribute to the Mg(2+) site. Asp-298 functions as the 4-aspartylphosphate intermediate in the catalytic mechanism. A disordered region spans residues 418–519 (ADSKVPESTG…KLVAANKKRK (102 aa)). Over residues 439 to 464 (GSEDEEGDEGESGEVESGDEEREEGE) the composition is skewed to acidic residues. An association with (pre-)40S ribosomal particle region spans residues 440–519 (SEDEEGDEGE…KLVAANKKRK (80 aa)). 2 stretches are compositionally biased toward basic residues: residues 470–489 (KKRPRGKKHLDKAEKHAHKM) and 497–519 (EKRKEKMPKHVKKKLVAANKKRK).

Belongs to the protein kinase superfamily. RIO-type Ser/Thr kinase family. Mg(2+) serves as cofactor. Post-translationally, autophosphorylated.

It is found in the cytoplasm. The catalysed reaction is L-seryl-[protein] + ATP = O-phospho-L-seryl-[protein] + ADP + H(+). The enzyme catalyses L-threonyl-[protein] + ATP = O-phospho-L-threonyl-[protein] + ADP + H(+). It carries out the reaction ATP + H2O = ADP + phosphate + H(+). In terms of biological role, involved in the final steps of cytoplasmic maturation of the 40S ribosomal subunit. In vitro, has strong ATPase activity and only low protein kinase activity. The chain is Serine/threonine-protein kinase RIO1 from Chaetomium thermophilum (strain DSM 1495 / CBS 144.50 / IMI 039719) (Thermochaetoides thermophila).